A 232-amino-acid chain; its full sequence is uncharacterized protein (232 aa).

This is an uncharacterized protein from Aedes vexans (Inland floodwater mosquito).